Here is a 25-residue protein sequence, read N- to C-terminus: M-poneritoxin-Ng1a (25 aa).

Expressed by the venom gland.

Its subcellular location is the secreted. It is found in the target cell membrane. Its function is as follows. Has a broad spectrum of activity against both Gram-positive and Gram-negative bacteria and S.cerevisiae. Has insecticidal and hemolytic activities. May act by disrupting the integrity of the bacterial cell membrane. The sequence is that of M-poneritoxin-Ng1a from Neoponera goeldii (Ponerine ant).